The chain runs to 188 residues: dCTP deaminase (188 aa).

DCTP is bound by residues 111–116 (KSTYAR), 135–137 (TLE), Q156, Y170, and Q180. E137 (proton donor/acceptor) is an active-site residue.

Belongs to the dCTP deaminase family. In terms of assembly, homotrimer.

The catalysed reaction is dCTP + H2O + H(+) = dUTP + NH4(+). Its pathway is pyrimidine metabolism; dUMP biosynthesis; dUMP from dCTP (dUTP route): step 1/2. In terms of biological role, catalyzes the deamination of dCTP to dUTP. This Acidithiobacillus ferrooxidans (strain ATCC 23270 / DSM 14882 / CIP 104768 / NCIMB 8455) (Ferrobacillus ferrooxidans (strain ATCC 23270)) protein is dCTP deaminase.